The primary structure comprises 263 residues: Type III pantothenate kinase (263 aa).

9–16 contacts ATP; sequence DIGNTNVK. Substrate-binding positions include Tyr103 and 110-113; that span reads GADR. The active-site Proton acceptor is Asp112. Asp134 contacts K(+). Thr137 serves as a coordination point for ATP. Thr190 serves as a coordination point for substrate.

The protein belongs to the type III pantothenate kinase family. As to quaternary structure, homodimer. Requires NH4(+) as cofactor. It depends on K(+) as a cofactor.

It is found in the cytoplasm. The enzyme catalyses (R)-pantothenate + ATP = (R)-4'-phosphopantothenate + ADP + H(+). The protein operates within cofactor biosynthesis; coenzyme A biosynthesis; CoA from (R)-pantothenate: step 1/5. Its function is as follows. Catalyzes the phosphorylation of pantothenate (Pan), the first step in CoA biosynthesis. This chain is Type III pantothenate kinase, found in Oleidesulfovibrio alaskensis (strain ATCC BAA-1058 / DSM 17464 / G20) (Desulfovibrio alaskensis).